The following is a 688-amino-acid chain: MEYIKIAKVSNVVLHRRGTATQGTLHLTTHHLIFESPQLSTEFWFPYPLIYGVHKNPGSTLLSKLTSTNQIQLEGTDSQNYKLYQGKDLWSFVNIKVIGKDYAVFSLDFGGDLHLQARKVYDSILNLTVLSNITQLYAFIYISNNLERKLPSPDSWDIYDPIKEFRRQGLDSKDETCPWRLSTVNEHYEFCPTYPSKLFVPRSTSDILLKHASKFRSQKRIPVLTYHHKATDCNILRSSQPLPGLINQRSIQDEKLVWESFNSFCNKDIRRTKHVIVDARPRTNALAQMALGGGTENMDNYNFFLADNNMGVDKSLKLPTVTRLFLGIDNIHIVSNTAAYMTEVICQGGDLNLPLEQNLIRSQKFSNWLKLNTLILKSVDMLLKSIIFNHSNVLVHCSDGWDRTSQVVSLLEICLDPFYRTFEGFMILVEKDWCSFGHRFLERSGHLNSDIRFHDNTMHSNFNDVDTNGDDLDIGVNTQDDYAEDDEGGEDETNLINLSRISKKFNENFKLNKKSLKFVSPVFQQFLDCVYQLLTQNPDLFEFNERFLRRLVYHLYSCQYGTFLSNSEKEKFQQNLPNKTKSVWDYFRSRRKQFINPNFIQRKRSGMNEHDQNLEEEEKVEWISPDLKKVQWWWQLYGRKDSEMNDELRHKRDSVPISVDKKSKEHSNSDGGKGLNLSIFGFDMFNRK.

The region spanning 155–637 is the Myotubularin phosphatase domain; it reads SWDIYDPIKE…KKVQWWWQLY (483 aa). Residue cysteine 397 is the Phosphocysteine intermediate of the active site. Residues 647–668 show a composition bias toward basic and acidic residues; it reads ELRHKRDSVPISVDKKSKEHSN. Residues 647-672 form a disordered region; the sequence is ELRHKRDSVPISVDKKSKEHSNSDGG.

The protein belongs to the protein-tyrosine phosphatase family. Non-receptor class myotubularin subfamily.

It is found in the cytoplasm. The catalysed reaction is a 1,2-diacyl-sn-glycero-3-phospho-(1D-myo-inositol-3-phosphate) + H2O = a 1,2-diacyl-sn-glycero-3-phospho-(1D-myo-inositol) + phosphate. Functionally, lipid phosphatase which dephosphorylates phosphatidylinositol 3-monophosphate (PI3P). Involved in the control of PI3P-dependent signaling and in the maintenance of endosomal system integrity. The protein is Phosphoinositide 3-phosphatase of Saccharomyces cerevisiae (strain ATCC 204508 / S288c) (Baker's yeast).